The sequence spans 368 residues: 3-dehydroquinate synthase (368 aa).

NAD(+) contacts are provided by residues 71–76, 105–109, 129–130, lysine 142, and lysine 151; these read DGEAAK, GATTD, and TT. Residues glutamate 184, histidine 247, and histidine 263 each coordinate Zn(2+).

The protein belongs to the sugar phosphate cyclases superfamily. Dehydroquinate synthase family. Co(2+) serves as cofactor. Zn(2+) is required as a cofactor. The cofactor is NAD(+).

The protein localises to the cytoplasm. The catalysed reaction is 7-phospho-2-dehydro-3-deoxy-D-arabino-heptonate = 3-dehydroquinate + phosphate. The protein operates within metabolic intermediate biosynthesis; chorismate biosynthesis; chorismate from D-erythrose 4-phosphate and phosphoenolpyruvate: step 2/7. In terms of biological role, catalyzes the conversion of 3-deoxy-D-arabino-heptulosonate 7-phosphate (DAHP) to dehydroquinate (DHQ). This chain is 3-dehydroquinate synthase, found in Thermobifida fusca (strain YX).